The following is a 396-amino-acid chain: Elongation factor Tu (396 aa).

The tr-type G domain occupies 10 to 206; the sequence is KPHVNVGTIG…ALDTYIPTPE (197 aa). A G1 region spans residues 19 to 26; the sequence is GHVDHGKT. Residue 19 to 26 participates in GTP binding; the sequence is GHVDHGKT. Thr26 is a Mg(2+) binding site. The interval 60-64 is G2; sequence GITIN. A G3 region spans residues 81 to 84; it reads DCPG. Residues 81-85 and 136-139 contribute to the GTP site; these read DCPGH and NKCD. The segment at 136–139 is G4; sequence NKCD. The segment at 174-176 is G5; that stretch reads SAK.

The protein belongs to the TRAFAC class translation factor GTPase superfamily. Classic translation factor GTPase family. EF-Tu/EF-1A subfamily. As to quaternary structure, monomer.

The protein resides in the cytoplasm. The enzyme catalyses GTP + H2O = GDP + phosphate + H(+). In terms of biological role, GTP hydrolase that promotes the GTP-dependent binding of aminoacyl-tRNA to the A-site of ribosomes during protein biosynthesis. This is Elongation factor Tu from Burkholderia cenocepacia (strain HI2424).